A 254-amino-acid polypeptide reads, in one-letter code: Nickel import ATP-binding protein NikD (254 aa).

Residues P2–V241 enclose the ABC transporter domain. ATP is bound at residue G36 to S43.

Belongs to the ABC transporter superfamily. Nickel importer (TC 3.A.1.5.3) family. In terms of assembly, the complex is composed of two ATP-binding proteins (NikD and NikE), two transmembrane proteins (NikB and NikC) and a solute-binding protein (NikA).

The protein localises to the cell inner membrane. The catalysed reaction is Ni(2+)(out) + ATP + H2O = Ni(2+)(in) + ADP + phosphate + H(+). Its function is as follows. Part of the ABC transporter complex NikABCDE involved in nickel import. Responsible for energy coupling to the transport system. In Shigella flexneri, this protein is Nickel import ATP-binding protein NikD.